Consider the following 285-residue polypeptide: Bifunctional protein FolD (285 aa).

NADP(+) contacts are provided by residues 166–168 (GAS), serine 191, and isoleucine 232.

Belongs to the tetrahydrofolate dehydrogenase/cyclohydrolase family. As to quaternary structure, homodimer.

It catalyses the reaction (6R)-5,10-methylene-5,6,7,8-tetrahydrofolate + NADP(+) = (6R)-5,10-methenyltetrahydrofolate + NADPH. It carries out the reaction (6R)-5,10-methenyltetrahydrofolate + H2O = (6R)-10-formyltetrahydrofolate + H(+). It participates in one-carbon metabolism; tetrahydrofolate interconversion. Its function is as follows. Catalyzes the oxidation of 5,10-methylenetetrahydrofolate to 5,10-methenyltetrahydrofolate and then the hydrolysis of 5,10-methenyltetrahydrofolate to 10-formyltetrahydrofolate. The polypeptide is Bifunctional protein FolD (Actinobacillus pleuropneumoniae serotype 7 (strain AP76)).